A 170-amino-acid chain; its full sequence is Myosin regulatory light chain 2, skeletal muscle isoform (170 aa).

N,N,N-trimethylalanine is present on A2. S16 and S17 each carry phosphoserine. 2 positions are modified to phosphothreonine: T26 and T36. In terms of domain architecture, EF-hand 1 spans 26 to 61 (TQIQEFKEAFTVIDQNRDGIIDKEDLRDTFAAMGRL). Ca(2+)-binding residues include D39, N41, D43, and D50. A Phosphoserine modification is found at S76. 2 consecutive EF-hand domains span residues 96-131 (DPED…QCDR) and 132-167 (FSQE…GDAK). The residue at position 102 (T102) is a Phosphothreonine.

In terms of assembly, myosin is a hexamer of 2 heavy chains and 4 light chains.

Its function is as follows. Plays a role in muscle contraction. The sequence is that of Myosin regulatory light chain 2, skeletal muscle isoform from Bos taurus (Bovine).